Here is a 119-residue protein sequence, read N- to C-terminus: Large ribosomal subunit protein uL22 (119 aa).

The protein belongs to the universal ribosomal protein uL22 family. Part of the 50S ribosomal subunit.

This protein binds specifically to 23S rRNA; its binding is stimulated by other ribosomal proteins, e.g. L4, L17, and L20. It is important during the early stages of 50S assembly. It makes multiple contacts with different domains of the 23S rRNA in the assembled 50S subunit and ribosome. Its function is as follows. The globular domain of the protein is located near the polypeptide exit tunnel on the outside of the subunit, while an extended beta-hairpin is found that lines the wall of the exit tunnel in the center of the 70S ribosome. The polypeptide is Large ribosomal subunit protein uL22 (Bifidobacterium longum (strain DJO10A)).